A 560-amino-acid chain; its full sequence is ATP synthase subunit beta, mitochondrial (560 aa).

The N-terminal 54 residues, 1–54, are a transit peptide targeting the mitochondrion; that stretch reads MASRRLLASLLRQSAQRGGGLISRSLGNSIPKSASRASSRASPKGFLLNRAVQY. Disordered regions lie at residues 20 to 44 and 58 to 81; these read GLIS…ASPK and AAAP…KITD. 2 stretches are compositionally biased toward low complexity: residues 33–42 and 58–71; these read SASRASSRAS and AAAP…PPKS. 235 to 242 provides a ligand contact to ATP; it reads GGAGVGKT.

The protein belongs to the ATPase alpha/beta chains family. As to quaternary structure, F-type ATPases have 2 components, CF(1) - the catalytic core - and CF(0) - the membrane proton channel. CF(1) has five subunits: alpha(3), beta(3), gamma(1), delta(1), epsilon(1). CF(0) has three main subunits: a, b and c.

It is found in the mitochondrion. The protein resides in the mitochondrion inner membrane. It catalyses the reaction ATP + H2O + 4 H(+)(in) = ADP + phosphate + 5 H(+)(out). Mitochondrial membrane ATP synthase (F(1)F(0) ATP synthase or Complex V) produces ATP from ADP in the presence of a proton gradient across the membrane which is generated by electron transport complexes of the respiratory chain. F-type ATPases consist of two structural domains, F(1) - containing the extramembraneous catalytic core, and F(0) - containing the membrane proton channel, linked together by a central stalk and a peripheral stalk. During catalysis, ATP synthesis in the catalytic domain of F(1) is coupled via a rotary mechanism of the central stalk subunits to proton translocation. Subunits alpha and beta form the catalytic core in F(1). Rotation of the central stalk against the surrounding alpha(3)beta(3) subunits leads to hydrolysis of ATP in three separate catalytic sites on the beta subunits. The protein is ATP synthase subunit beta, mitochondrial (ATPB) of Nicotiana plumbaginifolia (Leadwort-leaved tobacco).